Here is a 106-residue protein sequence, read N- to C-terminus: Large ribosomal subunit protein uL24 (106 aa).

It belongs to the universal ribosomal protein uL24 family. In terms of assembly, part of the 50S ribosomal subunit.

One of two assembly initiator proteins, it binds directly to the 5'-end of the 23S rRNA, where it nucleates assembly of the 50S subunit. Its function is as follows. One of the proteins that surrounds the polypeptide exit tunnel on the outside of the subunit. This is Large ribosomal subunit protein uL24 from Acidiphilium cryptum (strain JF-5).